Consider the following 258-residue polypeptide: Type III pantothenate kinase (258 aa).

ATP is bound at residue 6–13; sequence DVGNTNTV. Substrate contacts are provided by residues tyrosine 100 and 107-110; that span reads GADR. Aspartate 109 functions as the Proton acceptor in the catalytic mechanism. Aspartate 129 contributes to the K(+) binding site. Residue threonine 132 coordinates ATP. Threonine 184 lines the substrate pocket.

Belongs to the type III pantothenate kinase family. Homodimer. Requires NH4(+) as cofactor. K(+) serves as cofactor.

Its subcellular location is the cytoplasm. It catalyses the reaction (R)-pantothenate + ATP = (R)-4'-phosphopantothenate + ADP + H(+). The protein operates within cofactor biosynthesis; coenzyme A biosynthesis; CoA from (R)-pantothenate: step 1/5. Functionally, catalyzes the phosphorylation of pantothenate (Pan), the first step in CoA biosynthesis. This chain is Type III pantothenate kinase, found in Geobacillus sp. (strain WCH70).